Here is a 422-residue protein sequence, read N- to C-terminus: UDP-N-acetylglucosamine 1-carboxyvinyltransferase (422 aa).

22–23 (KN) serves as a coordination point for phosphoenolpyruvate. Arginine 93 contacts UDP-N-acetyl-alpha-D-glucosamine. The active-site Proton donor is cysteine 117. A 2-(S-cysteinyl)pyruvic acid O-phosphothioketal modification is found at cysteine 117. UDP-N-acetyl-alpha-D-glucosamine contacts are provided by residues 122-126 (RPVDL), aspartate 308, and leucine 330.

The protein belongs to the EPSP synthase family. MurA subfamily.

It localises to the cytoplasm. It catalyses the reaction phosphoenolpyruvate + UDP-N-acetyl-alpha-D-glucosamine = UDP-N-acetyl-3-O-(1-carboxyvinyl)-alpha-D-glucosamine + phosphate. Its pathway is cell wall biogenesis; peptidoglycan biosynthesis. In terms of biological role, cell wall formation. Adds enolpyruvyl to UDP-N-acetylglucosamine. In Helicobacter pylori (strain HPAG1), this protein is UDP-N-acetylglucosamine 1-carboxyvinyltransferase.